The primary structure comprises 211 residues: Large ribosomal subunit protein bL25 (211 aa).

The tract at residues 185 to 211 (ESTTPAATEGEETEAAAAAPEPAAEDK) is disordered. A compositionally biased stretch (low complexity) spans 199–211 (AAAAAPEPAAEDK).

Belongs to the bacterial ribosomal protein bL25 family. CTC subfamily. In terms of assembly, part of the 50S ribosomal subunit; part of the 5S rRNA/L5/L18/L25 subcomplex. Contacts the 5S rRNA. Binds to the 5S rRNA independently of L5 and L18.

In terms of biological role, this is one of the proteins that binds to the 5S RNA in the ribosome where it forms part of the central protuberance. This Treponema denticola (strain ATCC 35405 / DSM 14222 / CIP 103919 / JCM 8153 / KCTC 15104) protein is Large ribosomal subunit protein bL25.